Here is a 557-residue protein sequence, read N- to C-terminus: Dihydroxy-acid dehydratase (557 aa).

Cysteine 50 lines the [2Fe-2S] cluster pocket. Aspartate 82 is a Mg(2+) binding site. Cysteine 123 provides a ligand contact to [2Fe-2S] cluster. Mg(2+) contacts are provided by aspartate 124 and lysine 125. The residue at position 125 (lysine 125) is an N6-carboxylysine. Residue cysteine 195 coordinates [2Fe-2S] cluster. Glutamate 447 provides a ligand contact to Mg(2+). Catalysis depends on serine 473, which acts as the Proton acceptor.

It belongs to the IlvD/Edd family. As to quaternary structure, homodimer. The cofactor is [2Fe-2S] cluster. It depends on Mg(2+) as a cofactor.

The catalysed reaction is (2R)-2,3-dihydroxy-3-methylbutanoate = 3-methyl-2-oxobutanoate + H2O. It catalyses the reaction (2R,3R)-2,3-dihydroxy-3-methylpentanoate = (S)-3-methyl-2-oxopentanoate + H2O. The protein operates within amino-acid biosynthesis; L-isoleucine biosynthesis; L-isoleucine from 2-oxobutanoate: step 3/4. It participates in amino-acid biosynthesis; L-valine biosynthesis; L-valine from pyruvate: step 3/4. Its function is as follows. Functions in the biosynthesis of branched-chain amino acids. Catalyzes the dehydration of (2R,3R)-2,3-dihydroxy-3-methylpentanoate (2,3-dihydroxy-3-methylvalerate) into 2-oxo-3-methylpentanoate (2-oxo-3-methylvalerate) and of (2R)-2,3-dihydroxy-3-methylbutanoate (2,3-dihydroxyisovalerate) into 2-oxo-3-methylbutanoate (2-oxoisovalerate), the penultimate precursor to L-isoleucine and L-valine, respectively. In Nitrosospira multiformis (strain ATCC 25196 / NCIMB 11849 / C 71), this protein is Dihydroxy-acid dehydratase.